Consider the following 377-residue polypeptide: 23S rRNA (uracil(747)-C(5))-methyltransferase RlmC (377 aa).

The [4Fe-4S] cluster site is built by C3, C11, C14, and C87. S-adenosyl-L-methionine is bound by residues Q212, F241, E262, and N307. C334 serves as the catalytic Nucleophile.

This sequence belongs to the class I-like SAM-binding methyltransferase superfamily. RNA M5U methyltransferase family. RlmC subfamily.

It catalyses the reaction uridine(747) in 23S rRNA + S-adenosyl-L-methionine = 5-methyluridine(747) in 23S rRNA + S-adenosyl-L-homocysteine + H(+). Functionally, catalyzes the formation of 5-methyl-uridine at position 747 (m5U747) in 23S rRNA. The protein is 23S rRNA (uracil(747)-C(5))-methyltransferase RlmC of Photorhabdus laumondii subsp. laumondii (strain DSM 15139 / CIP 105565 / TT01) (Photorhabdus luminescens subsp. laumondii).